A 625-amino-acid chain; its full sequence is Thrombopoietin receptor (625 aa).

The first 25 residues, 1–25 (MPSWALFMVTSCLLLALPNQAQVTS), serve as a signal peptide directing secretion. Residues 26–482 (QDVFLLALGT…RVSTGSETAW (457 aa)) are Extracellular-facing. Residue Asn-117 is glycosylated (N-linked (GlcNAc...) asparagine). Fibronectin type-III domains follow at residues 178-270 (NATA…PVTV) and 383-479 (PTPS…TGSE). The WSXWS motif signature appears at 465–469 (WSAWS). The helical transmembrane segment at 483-504 (ITLVTALLLVLSLSALLGLLLL) threads the bilayer. At 505–625 (KWQFPAHYRR…YLPLSYWQQP (121 aa)) the chain is on the cytoplasmic side. A Box 1 motif motif is present at residues 519–527 (LWPSLPDLH). Glycyl lysine isopeptide (Lys-Gly) (interchain with G-Cter in ubiquitin) cross-links involve residues Lys-544 and Lys-564. Phosphotyrosine occurs at positions 616 and 621.

Belongs to the type I cytokine receptor family. Type 1 subfamily. In terms of assembly, homodimer. Interacts with ATXN2L. Interacts with JAK2 and TYK2; these interactions increase MPL localization to the cell membrane. Interacts with THPO. Interacts with SHIP/INPP5D. Interacts with kinases BTK and SYK. Post-translationally, ubiquitination at Lys-544 and Lys-564 targets MPL for degradation by both the lysosomal and proteasomal pathways. The E3 ubiquitin-protein ligase CBL significantly contributes to this ubiquitination.

The protein localises to the cell membrane. Its subcellular location is the golgi apparatus. The protein resides in the cell surface. Functionally, receptor for thrombopoietin that regulates hematopoietic stem cell renewal, megakaryocyte differentiation, and platelet formation. Upon activation by THPO, induces rapid tyrosine phosphorylation and activation of JAK2, providing docking sites for many signaling proteins such as STAT5, SHIP/INPP5D, GRB2, SOS1 and PI3K. In turn, These signaling cascades lead to the proliferation, survival, and differentiation of megakaryocytes, ultimately leading to increased platelet production. In terms of biological role, acts as an inhibitor of thrombopoietin signaling by promoting protein down-regulation of full-length isoform Mpl-fl. This is Thrombopoietin receptor (Mpl) from Mus musculus (Mouse).